Reading from the N-terminus, the 557-residue chain is Urocanate hydratase (557 aa).

NAD(+) contacts are provided by residues G53–G54, Q131, G177–G179, D197, R202, N243–A244, Q264–H268, Y274–L275, and Y323. Residue C411 is part of the active site. NAD(+) is bound at residue G493.

Belongs to the urocanase family. It depends on NAD(+) as a cofactor.

It localises to the cytoplasm. The enzyme catalyses 4-imidazolone-5-propanoate = trans-urocanate + H2O. It functions in the pathway amino-acid degradation; L-histidine degradation into L-glutamate; N-formimidoyl-L-glutamate from L-histidine: step 2/3. In terms of biological role, catalyzes the conversion of urocanate to 4-imidazolone-5-propionate. The protein is Urocanate hydratase of Hahella chejuensis (strain KCTC 2396).